An 804-amino-acid polypeptide reads, in one-letter code: Probable replication endonuclease from prophage-like region (804 aa).

Residues Tyr498 and Tyr502 each act as O-(5'-phospho-DNA)-tyrosine intermediate in the active site.

The protein belongs to the phage GPA family.

Its function is as follows. Possible endonuclease which induces a single-strand cut and initiates DNA replication. This chain is Probable replication endonuclease from prophage-like region, found in Escherichia coli O6:H1 (strain CFT073 / ATCC 700928 / UPEC).